We begin with the raw amino-acid sequence, 559 residues long: Tissue-type plasminogen activator (559 aa).

Residues 1 to 17 form the signal peptide; it reads MKRELLCVLLLCGLAFP. A propeptide spanning residues 18–29 is cleaved from the precursor; that stretch reads LPDQGIHGRFRR. Positions 30–32 are cleaved as a propeptide — removed by plasmin; that stretch reads GAR. The Fibronectin type-I domain occupies 36–78; it reads ATCRDEPTQTTYQQHQSWLRPMLRSSRVEYCRCNSGLVQCHSV. 17 disulfides stabilise this stretch: C38/C68, C66/C75, C83/C94, C88/C105, C107/C116, C124/C205, C145/C187, C176/C200, C213/C294, C234/C276, C265/C289, C297/C428, C340/C356, C348/C417, C442/C516, C474/C490, and C506/C534. The interval 39–49 is important for binding to annexin A2; it reads RDEPTQTTYQQ. Positions 79–117 constitute an EGF-like domain; sequence PVRSCSEPRCFNGGTCQQALYFSDFVCQCPDGFVGKRCD. 2 consecutive Kringle domains span residues 124–205 and 213–294; these read CFEE…TPAC and CYVG…MSPC. A glycan (N-linked (GlcNAc...) asparagine) is linked at N149. The Peptidase S1 domain occupies 309–558; it reads IKGGLYTDIT…YLDWIHDNMK (250 aa). Active-site charge relay system residues include H355 and D404. N481 is a glycosylation site (N-linked (GlcNAc...) asparagine). Residue S510 is the Charge relay system of the active site.

Belongs to the peptidase S1 family. Heterodimer of chain A and chain B held by a disulfide bond. Binds to fibrin with high affinity. This interaction leads to an increase in the catalytic efficiency of the enzyme due to an increase in affinity for plasminogen. Similarly, binding to heparin increases the activation of plasminogen. Binds to annexin A2, cytokeratin-8, fibronectin and laminin. Binds to mannose receptor and the low-density lipoprotein receptor-related protein (LRP1); these proteins are involved in TPA clearance. Binds LRP1B; binding is followed by internalization and degradation. Forms heterodimer with SERPINA5. Interacts with SERPINE1. In complex with SERPINE1, interacts with SORL1. The single chain, almost fully active enzyme, can be further processed into a two-chain fully active form by a cleavage after Arg-308 catalyzed by plasmin, tissue kallikrein or factor Xa.

Its subcellular location is the secreted. The protein resides in the extracellular space. It catalyses the reaction Specific cleavage of Arg-|-Val bond in plasminogen to form plasmin.. With respect to regulation, inhibited by SERPINA5. Inhibited by SERPINE1. In terms of biological role, converts the abundant, but inactive, zymogen plasminogen to plasmin by hydrolyzing a single Arg-Val bond in plasminogen. By controlling plasmin-mediated proteolysis, it plays an important role in tissue remodeling and degradation, in cell migration and many other physiopathological events. During oocyte activation, plays a role in cortical granule reaction in the zona reaction, which contributes to the block to polyspermy. The polypeptide is Tissue-type plasminogen activator (Plat) (Mus musculus (Mouse)).